The sequence spans 457 residues: Vasoactive intestinal polypeptide receptor (457 aa).

The N-terminal stretch at 1 to 19 (MGLVEVVWWWRWRFGGGGG) is a signal peptide. Residues 20-141 (GLVVEVEVWW…KEQTAFYGTV (122 aa)) are Extracellular-facing. Intrachain disulfides connect cysteine 51–cysteine 73, cysteine 64–cysteine 105, and cysteine 87–cysteine 122. Residues asparagine 59, asparagine 70, asparagine 100, and asparagine 104 are each glycosylated (N-linked (GlcNAc...) asparagine). The helical transmembrane segment at 142 to 166 (KTGYTIGHTLSLIALTAAMIILCLF) threads the bilayer. Over 167 to 173 (RKLHCTR) the chain is Cytoplasmic. A helical transmembrane segment spans residues 174–193 (NYIHMHLFMSFIMRAIAVFI). Residues 194–215 (KDVTLFESGEPEHCFVSSVGCK) lie on the Extracellular side of the membrane. Cysteine 214 and cysteine 284 are oxidised to a cystine. Residues 216-239 (AMMVFFQYCVMANFFWLLVEGLYL) form a helical membrane-spanning segment. Over 240-253 (HTLLVISFFSERKY) the chain is Cytoplasmic. Residues 254–275 (FWWYILIGWGAPSVFITAWTVV) traverse the membrane as a helical segment. Residues 276 to 292 (RIYFFNVGCWEEIIESP) are Extracellular-facing. Residues 293–316 (IWWIIKTPILVSILVNFILFICII) form a helical membrane-spanning segment. Topologically, residues 317–341 (RILVQKLHSPDVGHNETSQYSRLAK) are cytoplasmic. Residues 342–361 (STLLLIPLFGIHYIMFAFFP) traverse the membrane as a helical segment. Residues 362–373 (DNFKAQVKLVFE) lie on the Extracellular side of the membrane. A helical membrane pass occupies residues 374–393 (LVVGSFQGFVVAVLYCFLNG). Over 394 to 457 (EVQAELKRKW…SSFQAEFSLV (64 aa)) the chain is Cytoplasmic.

Belongs to the G-protein coupled receptor 2 family. In terms of tissue distribution, expressed in pituitary, hypothalamus, small intestine and ovarian follicles.

The protein resides in the cell membrane. This is a receptor for VIP. The activity of this receptor is mediated by G proteins which activate adenylyl cyclase. This Meleagris gallopavo (Wild turkey) protein is Vasoactive intestinal polypeptide receptor (VIPR1).